The sequence spans 312 residues: DNA-directed RNA polymerase subunit alpha (312 aa).

Residues 1 to 226 are alpha N-terminal domain (alpha-NTD); that stretch reads MIEFEKPNIT…EHLNLFTNLT (226 aa). Positions 243-312 are alpha C-terminal domain (alpha-CTD); that stretch reads DDRILERTIE…DLGLGLKNDK (70 aa).

The protein belongs to the RNA polymerase alpha chain family. As to quaternary structure, homodimer. The RNAP catalytic core consists of 2 alpha, 1 beta, 1 beta' and 1 omega subunit. When a sigma factor is associated with the core the holoenzyme is formed, which can initiate transcription.

The catalysed reaction is RNA(n) + a ribonucleoside 5'-triphosphate = RNA(n+1) + diphosphate. Its function is as follows. DNA-dependent RNA polymerase catalyzes the transcription of DNA into RNA using the four ribonucleoside triphosphates as substrates. The chain is DNA-directed RNA polymerase subunit alpha from Streptococcus sanguinis (strain SK36).